We begin with the raw amino-acid sequence, 236 residues long: 1-(5-phosphoribosyl)-5-[(5-phosphoribosylamino)methylideneamino] imidazole-4-carboxamide isomerase (236 aa).

Asp-8 functions as the Proton acceptor in the catalytic mechanism. The active-site Proton donor is the Asp-127.

This sequence belongs to the HisA/HisF family.

Its subcellular location is the cytoplasm. The catalysed reaction is 1-(5-phospho-beta-D-ribosyl)-5-[(5-phospho-beta-D-ribosylamino)methylideneamino]imidazole-4-carboxamide = 5-[(5-phospho-1-deoxy-D-ribulos-1-ylimino)methylamino]-1-(5-phospho-beta-D-ribosyl)imidazole-4-carboxamide. It participates in amino-acid biosynthesis; L-histidine biosynthesis; L-histidine from 5-phospho-alpha-D-ribose 1-diphosphate: step 4/9. The polypeptide is 1-(5-phosphoribosyl)-5-[(5-phosphoribosylamino)methylideneamino] imidazole-4-carboxamide isomerase (Campylobacter fetus subsp. fetus (strain 82-40)).